Consider the following 238-residue polypeptide: Probable transglycosylase SceD 3 (238 aa).

The signal sequence occupies residues 1 to 27 (MKKTVVASTLAVGLGVTGFAAGNSADA). Positions 82-161 (YGQGSTNAPA…SEASEGSSVN (80 aa)) are disordered. Over residues 89–156 (APAQETAEQP…NESSSSEASE (68 aa)) the composition is skewed to low complexity.

Belongs to the transglycosylase family. SceD subfamily.

Its subcellular location is the secreted. Its function is as follows. Is able to cleave peptidoglycan and affects clumping and separation of bacterial cells. This is Probable transglycosylase SceD 3 (sceD3) from Staphylococcus saprophyticus subsp. saprophyticus (strain ATCC 15305 / DSM 20229 / NCIMB 8711 / NCTC 7292 / S-41).